A 198-amino-acid chain; its full sequence is HTH-type transcriptional regulator BetI (198 aa).

One can recognise an HTH tetR-type domain in the interval 8 to 68 (PLRRRELIDA…ATMRHLLREL (61 aa)). A DNA-binding region (H-T-H motif) is located at residues 31 to 50 (TVAQIAHEAGVSPALAHHYF).

It participates in amine and polyamine biosynthesis; betaine biosynthesis via choline pathway [regulation]. Functionally, repressor involved in the biosynthesis of the osmoprotectant glycine betaine. It represses transcription of the choline transporter BetT and the genes of BetAB involved in the synthesis of glycine betaine. The polypeptide is HTH-type transcriptional regulator BetI (Brucella melitensis biotype 2 (strain ATCC 23457)).